Reading from the N-terminus, the 437-residue chain is Adenylosuccinate synthetase (437 aa).

GTP-binding positions include 12-18 (GDEGKGK) and 40-42 (GHT). The active-site Proton acceptor is D13. Mg(2+) contacts are provided by D13 and G40. Residues 13–16 (DEGK), 38–41 (NAGH), T128, R142, Q223, T238, and R302 contribute to the IMP site. Residue H41 is the Proton donor of the active site. 298 to 304 (TTTGRRR) contributes to the substrate binding site. GTP is bound by residues R304, 330–332 (KLD), and 412–414 (SLG).

Belongs to the adenylosuccinate synthetase family. In terms of assembly, homodimer. Mg(2+) serves as cofactor.

It is found in the cytoplasm. The enzyme catalyses IMP + L-aspartate + GTP = N(6)-(1,2-dicarboxyethyl)-AMP + GDP + phosphate + 2 H(+). The protein operates within purine metabolism; AMP biosynthesis via de novo pathway; AMP from IMP: step 1/2. In terms of biological role, plays an important role in the de novo pathway of purine nucleotide biosynthesis. Catalyzes the first committed step in the biosynthesis of AMP from IMP. In Synechococcus sp. (strain CC9311), this protein is Adenylosuccinate synthetase.